We begin with the raw amino-acid sequence, 445 residues long: Argininosuccinate synthase (445 aa).

Residues 18–26 (AFSGGLDTS) and A44 contribute to the ATP site. Y100 contributes to the L-citrulline binding site. ATP is bound by residues G130 and T132. Positions 132, 136, and 137 each coordinate L-aspartate. N136 provides a ligand contact to L-citrulline. D137 contributes to the ATP binding site. L-citrulline contacts are provided by R140 and S193. D195 provides a ligand contact to ATP. The L-citrulline site is built by T202, E204, and E281.

It belongs to the argininosuccinate synthase family. Type 2 subfamily. Homotetramer.

The protein resides in the cytoplasm. It catalyses the reaction L-citrulline + L-aspartate + ATP = 2-(N(omega)-L-arginino)succinate + AMP + diphosphate + H(+). It participates in amino-acid biosynthesis; L-arginine biosynthesis; L-arginine from L-ornithine and carbamoyl phosphate: step 2/3. This is Argininosuccinate synthase (argG) from Pasteurella multocida (strain Pm70).